A 683-amino-acid chain; its full sequence is MDDYKYQDNYGGYAPSDGYYRGNESNPEEDAQSDVTEGHDEEDEIYEGEYQGIPHPDDVKAKQAKMAPSRMDSLRGQTDLMAERLEDEEQLAHQYETIMDECGHGRFQWILFFVLGLALMADGVEVFVVSFALPSAEKDMCLSSSKKGMLGMIVYLGMMAGAFILGGLADKLGRKRVLSMSLAVNASFASLSSFVQGYGAFLFCRLISGIGIGGALPIVFAYFSEFLSREKRGEHLSWLGIFWMTGGLYASAMAWSIIPHYGWGFSMGTNYHFHSWRVFVIVCALPCTVSMVALKFMPESPRFLLEMGKHDEAWMILKQVHDTNMRAKGTPEKVFTVSNIKTPKQMDEFIEIQSSTGTWYQRWLVRFKTIFKQVWDNALYCVMGPYRMNTLILAVVWFAMAFSYYGLTVWFPDMIRYFQDEEYKSKMKVFFGEHVYGATINFTMENQIHQHGKLVNDKFTRMYFKHVLFEDTFFDECYFEDVTSTDTYFKNCTIESTIFYNTDLYEHKFINCRFINSTFLEQKEGCHMDLEQDNDFLIYLVSFLGSLSVLPGNIISALLMDRIGRLKMIGGSMLISAVCCFFLFFGNSESAMIGWQCLFCGTSIAAWNALDVITVELYPTNQRATAFGILNGLCKFGAILGNTIFASFVGITKVVPILLAAASLVGGGLIALRLPETREQVLM.

Positions 1 to 42 are disordered; it reads MDDYKYQDNYGGYAPSDGYYRGNESNPEEDAQSDVTEGHDEE. The Cytoplasmic segment spans residues 1–108; the sequence is MDDYKYQDNY…MDECGHGRFQ (108 aa). Position 33 is a phosphoserine (Ser-33). Phosphothreonine is present on Thr-36. Residues 109–129 traverse the membrane as a helical segment; that stretch reads WILFFVLGLALMADGVEVFVV. Over 130–148 the chain is Extracellular; the sequence is SFALPSAEKDMCLSSSKKG. The chain crosses the membrane as a helical span at residues 149–169; it reads MLGMIVYLGMMAGAFILGGLA. Topologically, residues 170-182 are cytoplasmic; that stretch reads DKLGRKRVLSMSL. The chain crosses the membrane as a helical span at residues 183–203; it reads AVNASFASLSSFVQGYGAFLF. Over 204 to 205 the chain is Extracellular; that stretch reads CR. A helical membrane pass occupies residues 206–226; that stretch reads LISGIGIGGALPIVFAYFSEF. Residues 227–237 lie on the Cytoplasmic side of the membrane; sequence LSREKRGEHLS. A helical transmembrane segment spans residues 238-258; the sequence is WLGIFWMTGGLYASAMAWSII. The Extracellular segment spans residues 259 to 277; the sequence is PHYGWGFSMGTNYHFHSWR. Residues 278–298 form a helical membrane-spanning segment; the sequence is VFVIVCALPCTVSMVALKFMP. The Cytoplasmic segment spans residues 299-390; it reads ESPRFLLEMG…CVMGPYRMNT (92 aa). A helical transmembrane segment spans residues 391–411; sequence LILAVVWFAMAFSYYGLTVWF. Topologically, residues 412-535 are extracellular; that stretch reads PDMIRYFQDE…CHMDLEQDND (124 aa). The residue at position 423 (Tyr-423) is a Phosphotyrosine. Asn-441, Asn-491, and Asn-516 each carry an N-linked (GlcNAc...) asparagine glycan. A helical membrane pass occupies residues 536–556; the sequence is FLIYLVSFLGSLSVLPGNIIS. The Cytoplasmic segment spans residues 557–565; the sequence is ALLMDRIGR. A helical transmembrane segment spans residues 566 to 586; that stretch reads LKMIGGSMLISAVCCFFLFFG. At 587 to 592 the chain is on the extracellular side; it reads NSESAM. A helical membrane pass occupies residues 593–613; the sequence is IGWQCLFCGTSIAAWNALDVI. Residues 614-626 lie on the Cytoplasmic side of the membrane; sequence TVELYPTNQRATA. The helical transmembrane segment at 627–649 threads the bilayer; sequence FGILNGLCKFGAILGNTIFASFV. The Extracellular segment spans residues 650–653; that stretch reads GITK. Residues 654-672 traverse the membrane as a helical segment; the sequence is VVPILLAAASLVGGGLIAL. Over 673–683 the chain is Cytoplasmic; it reads RLPETREQVLM.

The protein belongs to the major facilitator superfamily. Interacts with SYT1 in a calcium-independent manner. Forms a complex with SYT1, syntaxin-1 and SNAP25. As to quaternary structure, (Microbial infection) Interacts with C.botulinum neurotoxin type A2 (BoNT/A, botA). Interaction is improved by glycosylation of SV2. Post-translationally, N-glycosylated. In terms of processing, the N-terminal cytoplasmic domain is phosphorylated by CK1.

The protein localises to the cytoplasmic vesicle. It is found in the secretory vesicle. It localises to the synaptic vesicle membrane. The protein resides in the acrosome. Functionally, probably plays a role in the control of regulated secretion in neural and endocrine cells. In terms of biological role, (Microbial infection) Receptor for the C.botulinum neurotoxin type A2 (BoNT/A, botA); glycosylation is not essential but enhances the interaction. Probably also serves as a receptor for the closely related C.botulinum neurotoxin type A1. The polypeptide is Synaptic vesicle glycoprotein 2B (SV2B) (Homo sapiens (Human)).